The chain runs to 427 residues: 3-phosphoshikimate 1-carboxyvinyltransferase (427 aa).

Positions 22, 23, and 27 each coordinate 3-phosphoshikimate. Position 22 (Lys-22) interacts with phosphoenolpyruvate. The phosphoenolpyruvate site is built by Gly-96 and Arg-124. Positions 169, 170, 171, 197, 313, 336, and 340 each coordinate 3-phosphoshikimate. Residue Gln-171 coordinates phosphoenolpyruvate. The active-site Proton acceptor is Asp-313. Arg-344, Arg-386, and Lys-411 together coordinate phosphoenolpyruvate.

The protein belongs to the EPSP synthase family. In terms of assembly, monomer.

The protein resides in the cytoplasm. The enzyme catalyses 3-phosphoshikimate + phosphoenolpyruvate = 5-O-(1-carboxyvinyl)-3-phosphoshikimate + phosphate. It functions in the pathway metabolic intermediate biosynthesis; chorismate biosynthesis; chorismate from D-erythrose 4-phosphate and phosphoenolpyruvate: step 6/7. In terms of biological role, catalyzes the transfer of the enolpyruvyl moiety of phosphoenolpyruvate (PEP) to the 5-hydroxyl of shikimate-3-phosphate (S3P) to produce enolpyruvyl shikimate-3-phosphate and inorganic phosphate. The protein is 3-phosphoshikimate 1-carboxyvinyltransferase of Salmonella typhimurium (strain LT2 / SGSC1412 / ATCC 700720).